The primary structure comprises 20 residues: Poneritoxin (20 aa).

Methionine sulfoxide; in form U1-PONTX-Dq3c is present on Met-18. The residue at position 19 (Lys-19) is a Lysine amide; in form U1-PONTX-Dq3a and U1-PONTX-Dq3c.

Post-translationally, the peptide spanning residues 2 to 19 occurs in 3 forms and has been given 3 different names. U1-PONTX-Dq3a has an amidated Lys-19, U1-PONTX-Dq3c has an amidated Lys-19 and an oxidized Met-18, and U1-PONTX-Dq3b has no modifications at either Met-18 or Lys-19. In terms of tissue distribution, expressed by the venom gland.

It localises to the secreted. Functionally, may have antimicrobial properties, like most ant linear peptides. This is Poneritoxin from Dinoponera quadriceps (South American ant).